We begin with the raw amino-acid sequence, 329 residues long: Bile salt hydrolase/transferase (329 aa).

The active-site Nucleophile; acyl-thioester intermediate is the Cys2. Deoxycholate is bound by residues Cys2 and Arg18. Residue Asn82 coordinates taurine.

The protein belongs to the peptidase C59 family. In terms of assembly, homotetramer. The tetramer consists of a dimer of dimers.

It catalyses the reaction glycocholate + H2O = cholate + glycine. The enzyme catalyses cholate + taurine = taurocholate + H2O. The catalysed reaction is taurodeoxycholate + H2O = deoxycholate + taurine. It carries out the reaction glycodeoxycholate + H2O = deoxycholate + glycine. It catalyses the reaction chenodeoxycholate + glycine = glycochenodeoxycholate + H2O. The enzyme catalyses taurochenodeoxycholate + H2O = chenodeoxycholate + taurine. The catalysed reaction is an L-alpha-amino acid + cholate = an N-choloyl-L-alpha-amino acid + H2O. It carries out the reaction an L-alpha-amino acid + taurocholate = an N-choloyl-L-alpha-amino acid + taurine. It catalyses the reaction glycocholate + an L-alpha-amino acid = an N-choloyl-L-alpha-amino acid + glycine. The enzyme catalyses cholate + L-histidine = L-histidocholate + H2O. The catalysed reaction is taurocholate + L-histidine = L-histidocholate + taurine. It carries out the reaction glycocholate + L-histidine = L-histidocholate + glycine. It catalyses the reaction cholate + L-arginine = L-arginocholate + H2O. The enzyme catalyses taurocholate + L-arginine = L-arginocholate + taurine. The catalysed reaction is glycocholate + L-arginine = L-arginocholate + glycine. It carries out the reaction cholate + L-phenylalanine = L-phenylalanocholate + H2O. It catalyses the reaction taurocholate + L-phenylalanine = L-phenylalanocholate + taurine. It functions in the pathway lipid metabolism; bile acid biosynthesis. Its function is as follows. Possesses dual functions in bile acid metabolism. Acts as a bile salt hydrolase that catalyzes the deconjugation of glycine- and taurine-linked bile salts, which occurs naturally in the intestines of humans, releasing amino acid residues and deconjugated bile salts (bile acids). Can hydrolyze the amide bond in major human conjugated bile salts, such as glycocholate (GCA), taurocholate (TCA) and taurodeoxycholate (TDCA). Shows a slight preference for taurine-conjugated bile acids as substrates. Also acts as an amine N-acyltransferase that conjugates a wide variety of amino acids to conjugated and non-conjugated bile acids, thus producing bacterial bile acid amidates (BBAAs) - also named microbially conjugated bile acids (MCBAs) - in the gastrointestinal tract. These BBAAs may facilitate communication between the microbiota and host through the activation of human ligand-activated transcription factors. This is Bile salt hydrolase/transferase (cbh) from Clostridium perfringens (strain 13 / Type A).